Reading from the N-terminus, the 742-residue chain is Two pore calcium channel protein 1 (742 aa).

The segment at 1-44 (MSEAQAPLITEEAAERGLASSGSRRLSDGGGGQGSRKYRRRSDA) is disordered. At 1-82 (MSEAQAPLIT…NDTRFGRAMS (82 aa)) the chain is on the cytoplasmic side. The chain crosses the membrane as a helical span at residues 83–103 (FYFVYLRLDWLWSLNIFALIL). The Extracellular portion of the chain corresponds to 104–140 (LNFLEKPLWCRKDALHACDQRDMYFLGQLPYFSKTES). The helical transmembrane segment at 141 to 161 (LIYEGLTLVILVMEILCPLSY) threads the bilayer. At 162 to 176 (EGLNIFWRSTTNKLK) the chain is on the cytoplasmic side. The chain crosses the membrane as a helical span at residues 177–197 (ILLLFILACDILVFAFSSQPF). Over 198–204 (RLAPYIR) the chain is Extracellular. The chain crosses the membrane as a helical; Voltage-sensor span at residues 205–226 (VVFLIMTIRELRMCAITLAGLI). A helical membrane pass occupies residues 227-247 (GTYLNVLALSLLFLLFASWLA). Topologically, residues 248–258 (YVTFEDTPQGK) are extracellular. The pore-forming intramembrane region spans 259-273 (TIFSSYGVTLYQMFV). Topologically, residues 274–296 (LFTTSNNPDVWVPAYKISRWYSL) are extracellular. The helical transmembrane segment at 297 to 317 (FFIVYVLLGVYFLTNLILAVI) threads the bilayer. The Cytoplasmic segment spans residues 318-446 (YDSFKEQFAK…SFVRSRTFEY (129 aa)). EF-hand domains are found at residues 335 to 370 (IRKN…LNKY) and 376 to 411 (TSRE…IAIK). The chain crosses the membrane as a helical span at residues 447 to 467 (IIVFVLLINLVAVIIETTLDI). Topologically, residues 468 to 480 (ENSSSQETWQEVE) are extracellular. Asn469 is a glycosylation site (N-linked (GlcNAc...) asparagine). A helical transmembrane segment spans residues 481–501 (FFLGWIYVAEMALKIFSLGFG). Residues 502 to 510 (AYWMEGQNK) are Cytoplasmic-facing. The chain crosses the membrane as a helical span at residues 511 to 531 (FDFVLTWTIFIGETLTFAFPS). Residues 532 to 540 (KLPFLSNGE) are Extracellular-facing. A helical; Voltage-sensor transmembrane segment spans residues 541 to 558 (WIRYLLLGRVLRLTRILL). Residues 559–582 (QVQRFRVFVATFFTLMSSLMPYLG) lie on the Cytoplasmic side of the membrane. A helical transmembrane segment spans residues 583–603 (IVFCILCMYCSLGLQIFGGIV). At 604–627 (YAGNPTLEETDLFSNDYLLFNFND) the chain is on the extracellular side. The segment at residues 628–642 (YPSGMVTLFNLLVMG) is an intramembrane region (pore-forming). Topologically, residues 643–663 (NWQVWMESYWQLTGSSWSLIY) are extracellular. The helical transmembrane segment at 664–684 (FVSFYLISILLLLNLIVAFVL) threads the bilayer. Over 685–742 (EAFFAEMELEKGEEVDIQSPTSGGIKKRRSMRVRSKGTMVDILLHHMLSNELDGSQNS) the chain is Cytoplasmic.

The protein belongs to the calcium channel alpha-1 subunit (TC 1.A.1.11) family. Two pore calcium channel subfamily. As to quaternary structure, homodimer.

It localises to the membrane. Its activity is regulated as follows. Inhibited by Al(3+). Functionally, functions as a voltage-gated inward-rectifying Ca(2+) channel (VDCC) across the plasma membrane that mediates sucrose-induced Ca(2+) influx in autotrophically grown leaf cells. Acts as the major ROS-responsive Ca(2+) channel and is the possible target of Al-dependent inhibition. Plays a regulatory role in defense responses. The chain is Two pore calcium channel protein 1 (TPC1) from Hordeum vulgare (Barley).